Consider the following 1401-residue polypeptide: Alpha-latrotoxin-Lt1a (1401 aa).

An N-terminal signal peptide occupies residues 1–20; that stretch reads MISVGEIMERANHSLVRMRR. The furin-like endopeptidase recognition region stretch occupies residues 17-20; the sequence is RMRR. Residues 238 to 257 are helix H8 is the probable transmembrane region of the tetrameric pore inserted in the target cell membrane; it reads VLYALLYGTQTYVSVMFFLL. Residues Cys413 and Cys1066 are joined by a disulfide bond. ANK repeat units lie at residues 458–489, 490–521, 525–554, 559–589, 593–622, 626–656, 660–690, 695–723, 729–758, 762–791, 795–824, 828–857, 862–891, 895–924, 928–957, 971–1003, 1004–1033, 1035–1064, 1068–1097, 1101–1131, 1137–1166, and 1170–1199; these read LYNAASNPDSAVGFKEFTKLNYDGANIRATFD, HGRTVFHAAAKSGNDKIMFGLTFLAKSTELNQ, KGYTPIHVAADSGNAGIVNLLIQRGVSINS, FLQTPLHLAAQRGFVTTFQRLMESPEININE, DGFTPLHYAIRGGERILEAFLNQISIDVNA, TGLTPFHLAIIKNDWPVASTLLGSKKVDINA, NNITALHYAAILGYLETTKQLINLKEINANV, GLLSALHYAILYKHDDVASFLMRSSNVNV, GGITPLHLAVIQGRKQILSLMFDIGVNIEQ, EKYTPLHLAAMSKYPELIQILLDQGSNFEA, SGATPLHLATFKGKSQAALILLNNEVNWRD, NGQMPIHGAAMTGLLDVAQAIISIDATVVD, NSDTPLNLAAQNSHIDVIKYFIDQGADINT, KGLAPLLAFSKKGNLDMVKYLFDKNANVYI, DGMNFFYYAVQNGHLNIVKYAMSEKDKFEW, EECAISHFAVCDAVQFDRIEIVKYFVGTLGNFA, ICGPLHQAARYGHLDIVKYLVEEEFLSVDG, KTDTPLCYASENGHFTVVQYLVSNGAKVNH, NGMTAIDKAITKNHLQVVQFLAANGVDFRR, RGTTPFLTAVAENALHIAEYLIREKRQDINI, DKDTALHLAVYYKNLQMIKLLIKYGIDVTI, and YDKTALDIAIDAKFSNIVEYLKTKSGKFRR. The 4C4.1 epitope stretch occupies residues 1026–1032; sequence EEFLSVD. A furin-like endopeptidase recognition region region spans residues 1196 to 1199; that stretch reads KFRR. A propeptide spanning residues 1200 to 1401 is cleaved from the precursor; it reads EYKSSYGERS…SDGILTKKLM (202 aa).

Belongs to the cationic peptide 01 (latrotoxin) family. 03 (alpha-latrotoxin) subfamily. As to quaternary structure, homotetramer in membranes. Processed by furin-like proteases at both the N- and C-termini. In terms of tissue distribution, expressed in venom gland, cephalothorax, and abdomen tissues from both males and females.

It localises to the secreted. The protein resides in the target cell membrane. Functionally, presynaptic neurotoxin that causes massive release of neurotransmitters from vertebrate (but not invertebrate) nerve terminals and endocrine cells via a complex mechanism involving activation of receptor(s) and toxin insertion into the plasma membrane with subsequent pore formation. Binds to neurexin-1-alpha (NRXN1) in a calcium dependent manner, adhesion G protein-coupled receptor L1 (ADGRL1, also termed latrophilin-1 and calcium-independent receptor of latrotoxin (CIRL)), and receptor-type tyrosine-protein phosphatase S (PTPRS), also termed PTP sigma. NRXN1 and PTPRS are suggested to provide a platform for binding and subsequent pore formation events. In contrast, binding to ADGRL1 does not involve oligomerization and channel formation, but direct downstream stimulation of the synaptic fusion machinery. In Latrodectus tredecimguttatus (Mediterranean black widow spider), this protein is Alpha-latrotoxin-Lt1a.